Consider the following 249-residue polypeptide: 2,3-bisphosphoglycerate-dependent phosphoglycerate mutase (249 aa).

Substrate contacts are provided by residues 9–16 (RHGQSQWN), 22–23 (TG), R61, 88–91 (ERHY), K99, 115–116 (RR), and 184–185 (GN). H10 acts as the Tele-phosphohistidine intermediate in catalysis. Residue E88 is the Proton donor/acceptor of the active site.

This sequence belongs to the phosphoglycerate mutase family. BPG-dependent PGAM subfamily. In terms of assembly, homodimer.

It carries out the reaction (2R)-2-phosphoglycerate = (2R)-3-phosphoglycerate. The protein operates within carbohydrate degradation; glycolysis; pyruvate from D-glyceraldehyde 3-phosphate: step 3/5. Catalyzes the interconversion of 2-phosphoglycerate and 3-phosphoglycerate. The sequence is that of 2,3-bisphosphoglycerate-dependent phosphoglycerate mutase from Xanthomonas oryzae pv. oryzae (strain MAFF 311018).